The following is a 685-amino-acid chain: MTRSPCSTTSRWISSMSTSEYRAVDAESDLPISAAELAALASQLYAASIRPGPDSPPQQAPVAPRGSVPDATAATSAGRTAAGTADVYPGPVPQVGGRDVYLPPPASPAPEAPPQAAPPAPRGSAPDATAATSAGRAAAGTSDVYSSWVPQLGVADIYLGAPTPAGPEAPPQSAPPAPRGQVPDTTAAATAYGADLSAFAVPTGIVSTAPGVQAGTAPPVPVVPRAATAPSWLPEAPSVADLGWSDAPAPDAPAGDEHDYHFLTKTDPVPQFRDEHEVFDVAAIRSDFPILKETVNGKPLIWFDNAATTQKPQVVIDRLSHFYAHENSNIHRAAHELAARATDAYEEARDTVAEFIGAPSSDNIVFVRGTTEAINLVAHAWGAKHLQPGDEIVITHLEHHANIVPWQLISQKTGAILKVAPIDDAGNLLLSEFEGLLGPRTKLVAASHVSNALGTVMPVDKIVELGHRYGARVLIDGAQSIQHIPIDVAELGADFFVFSGHKIYGPTGIGALYGTEEALTETPPWQGGGHMIADVTLERSLYQGPPTKFEAGTGNIADAVGLTEALRYVQRLGVERIAAYEHALLEYATPRLADIPGVRLIGTAQEKASVLSFVLAGHEPLEVGKALNAEGIAVRAGHHCAQPALRRLGLEATVRPSFAFYNTFEEIDVFLRAVRRIAEGGANVG.

Positions 1–282 (MTRSPCSTTS…RDEHEVFDVA (282 aa)) are cargo-loading domain. Disordered regions lie at residues 48–135 (SIRP…TSAG) and 162–185 (PTPAGPEAPPQSAPPAPRGQVPDT). Residues 71 to 85 (ATAATSAGRTAAGTA) show a composition bias toward low complexity. Over residues 102 to 121 (LPPPASPAPEAPPQAAPPAP) the composition is skewed to pro residues. The segment covering 122-135 (RGSAPDATAATSAG) has biased composition (low complexity). Residues 164-178 (PAGPEAPPQSAPPAP) are compositionally biased toward pro residues. Residue Lys502 is modified to N6-(pyridoxal phosphate)lysine. Residue Cys640 is the Cysteine persulfide intermediate of the active site.

The protein belongs to the class-V pyridoxal-phosphate-dependent aminotransferase family. Csd subfamily. Isolated from bacteria in a complex with encapsulin 2A (AC I3NID5), strongly suggesting it is found in a type 2A encapsulin nanocompartment. There are 1-2 copies of this protein in each encapsulin shell. Pyridoxal 5'-phosphate serves as cofactor.

It is found in the encapsulin nanocompartment. It localises to the cell membrane. It catalyses the reaction (sulfur carrier)-H + L-cysteine = (sulfur carrier)-SH + L-alanine. Its function is as follows. Cargo protein of a type 2A encapsulin nanocompartment involved in sulfur metabolism. Cysteine desulfurases mobilize the sulfur from L-cysteine to yield L-alanine, an essential step in sulfur metabolism for biosynthesis of a variety of sulfur-containing biomolecules. The sequence is that of Probable cysteine desulfurase from Mycolicibacterium paratuberculosis (strain ATCC BAA-968 / K-10) (Mycobacterium paratuberculosis).